A 37-amino-acid polypeptide reads, in one-letter code: Large ribosomal subunit protein bL36 (37 aa).

It belongs to the bacterial ribosomal protein bL36 family.

The protein is Large ribosomal subunit protein bL36 of Polaromonas naphthalenivorans (strain CJ2).